A 515-amino-acid chain; its full sequence is Arabinose import ATP-binding protein AraG 2 (515 aa).

Residues 1 to 22 (MTMQTMTAASGHDAEAGTPPDG) are disordered. 2 consecutive ABC transporter domains span residues 25-260 (LALD…MVGR) and 260-511 (RSIE…LIKL). Position 57–64 (57–64 (GENGAGKS)) interacts with ATP.

Belongs to the ABC transporter superfamily. Arabinose importer (TC 3.A.1.2.2) family. In terms of assembly, the complex is composed of two ATP-binding proteins (AraG), two transmembrane proteins (AraH) and a solute-binding protein (AraF).

Its subcellular location is the cell inner membrane. It catalyses the reaction L-arabinose(out) + ATP + H2O = L-arabinose(in) + ADP + phosphate + H(+). Functionally, part of the ABC transporter complex AraFGH involved in arabinose import. Responsible for energy coupling to the transport system. This is Arabinose import ATP-binding protein AraG 2 from Burkholderia cenocepacia (strain HI2424).